The following is a 76-amino-acid chain: Sec-independent protein translocase protein TatA (76 aa).

Residues 1-21 (MGGLSIWHWLIVLLIVALVFG) traverse the membrane as a helical segment. Residues 40–76 (KDGMKEGETPADAQQLPRTGTVDVNAKETTRSDSNKA) are disordered. Residues 64-76 (NAKETTRSDSNKA) show a composition bias toward basic and acidic residues.

It belongs to the TatA/E family. In terms of assembly, the Tat system comprises two distinct complexes: a TatABC complex, containing multiple copies of TatA, TatB and TatC subunits, and a separate TatA complex, containing only TatA subunits. Substrates initially bind to the TatABC complex, which probably triggers association of the separate TatA complex to form the active translocon.

Its subcellular location is the cell inner membrane. Part of the twin-arginine translocation (Tat) system that transports large folded proteins containing a characteristic twin-arginine motif in their signal peptide across membranes. TatA could form the protein-conducting channel of the Tat system. The chain is Sec-independent protein translocase protein TatA from Burkholderia ambifaria (strain MC40-6).